Reading from the N-terminus, the 238-residue chain is Lipid transferase CIDEC (238 aa).

The required for liquid-liquid phase separation (LLPS) stretch occupies residues 1-35; sequence MEYAMKSLSLLYPKSLSRHVSVRTSVVTQQLLSEP. In terms of domain architecture, CIDE-N spans 41–118; it reads RARPCRVSTA…VLQKGQKWQP (78 aa).

Belongs to the CIDE family. As to quaternary structure, homodimer. Homooligomer; undergoes liquid-liquid phase separation (LLPS) via its N-terminus, facilitating lipid droplet fusion, occurs at the lipid droplet contact sites. Interacts with CIDEA. Interacts with PLIN1. Interacts with NFAT5; this interaction is direct and retains NFAT5 in the cytoplasm. Interacts with CEBPB. Interacts with isoform CLSTN3beta of CLSTN3; inhibiting the lipid transferase activity of CIDEC. Post-translationally, ubiquitinated and targeted to proteasomal degradation, resulting in a short half-life (about 15 minutes in 3T3-L1 cells). Protein stability depends on triaclyglycerol synthesis, fatty acid availability and lipid droplet formation. As to expression, expressed mainly in adipose tissue, small intestine, heart, colon and stomach and, at lower levels, in brain, kidney and liver.

It localises to the lipid droplet. The protein localises to the endoplasmic reticulum. Its subcellular location is the nucleus. The catalysed reaction is a triacyl-sn-glycerol(in) = a triacyl-sn-glycerol(out). Its function is as follows. Lipid transferase specifically expressed in white adipose tissue, which promotes unilocular lipid droplet formation by mediating lipid droplet fusion. Lipid droplet fusion promotes their enlargement, restricting lipolysis and favoring lipid storage. Localizes on the lipid droplet surface, at focal contact sites between lipid droplets, and mediates atypical lipid droplet fusion by undergoing liquid-liquid phase separation (LLPS) and promoting directional net neutral lipid transfer from the smaller to larger lipid droplets. The transfer direction may be driven by the internal pressure difference between the contacting lipid droplet pair. Its role in neutral lipid transfer and lipid droplet enlargement is activated by the interaction with PLIN1. May also act as a CEBPB coactivator in the white adipose tissue to control the expression of a subset of CEBPB downstream target genes, including SOCS1, SOCS3, TGFB1, TGFBR1, ID2 and XDH. When overexpressed in preadipocytes, induces apoptosis or increases cell susceptibility to apoptosis induced by serum deprivation or TGFB treatment. The sequence is that of Lipid transferase CIDEC from Homo sapiens (Human).